The chain runs to 233 residues: U2 small nuclear ribonucleoprotein A' (233 aa).

LRR repeat units follow at residues 20–40, 42–63, 65–86, and 89–110; these read KLTLLLRDLQITELENLAITQ, KYQVIDLSNNDLISLGNIPKRF, NLQCLLLSNNNISYIDDESFPS, and HITSITLFNNNIYQFQKSFKDK. Positions 122 to 160 constitute an LRRCT domain; the sequence is NPITEMENYRYFIIWLIPSLKVLDFKKVKQAERKTSEDM.

Belongs to the U2 small nuclear ribonucleoprotein A family. As to quaternary structure, associated with the spliceosome.

Its subcellular location is the nucleus. In terms of biological role, involved in pre-mRNA splicing. In Candida albicans (strain SC5314 / ATCC MYA-2876) (Yeast), this protein is U2 small nuclear ribonucleoprotein A' (LEA1).